The sequence spans 145 residues: uncharacterized protein (145 aa).

The chain crosses the membrane as a helical span at residues 4–24; that stretch reads IYMLVALLISSLVLFAGCVQN.

The protein resides in the membrane. This is an uncharacterized protein from Methanocaldococcus jannaschii (strain ATCC 43067 / DSM 2661 / JAL-1 / JCM 10045 / NBRC 100440) (Methanococcus jannaschii).